The primary structure comprises 321 residues: Cytoskeleton protein RodZ (321 aa).

Residues 1–111 are Cytoplasmic-facing; that stretch reads MNTEATHDQN…LGKRRKKRDG (111 aa). In terms of domain architecture, HTH cro/C1-type spans 19–71; it reads LRNAREQLGLSQQAVAERLCLKVSTVRDIEEDKAPSDLASTFLRGYIRSYARL. The segment at residues 30–49 is a DNA-binding region (H-T-H motif); sequence QQAVAERLCLKVSTVRDIEE. Residues 112–132 form a helical; Signal-anchor for type II membrane protein membrane-spanning segment; that stretch reads WLMSFTWLVLFVVVGLTGAWW. Topologically, residues 133–321 are periplasmic; sequence WQNHKAQQEE…TINAEPTSAQ (189 aa). Positions 167-190 are disordered; it reads DTRAAASQDTTPAETAPAAPVDST. Residues 176-190 show a composition bias toward low complexity; it reads TTPAETAPAAPVDST.

The protein belongs to the RodZ family.

Its subcellular location is the cell inner membrane. Functionally, cytoskeletal protein that is involved in cell-shape control through regulation of the length of the long axis. The chain is Cytoskeleton protein RodZ from Salmonella arizonae (strain ATCC BAA-731 / CDC346-86 / RSK2980).